The following is a 333-amino-acid chain: tRNA N6-adenosine threonylcarbamoyltransferase (333 aa).

Fe cation is bound by residues histidine 111 and histidine 115. Substrate is bound by residues 134–138 (VVSGG), aspartate 167, glycine 180, aspartate 184, and asparagine 273. A Fe cation-binding site is contributed by aspartate 302.

The protein belongs to the KAE1 / TsaD family. Requires Fe(2+) as cofactor.

It localises to the cytoplasm. It carries out the reaction L-threonylcarbamoyladenylate + adenosine(37) in tRNA = N(6)-L-threonylcarbamoyladenosine(37) in tRNA + AMP + H(+). Required for the formation of a threonylcarbamoyl group on adenosine at position 37 (t(6)A37) in tRNAs that read codons beginning with adenine. Is involved in the transfer of the threonylcarbamoyl moiety of threonylcarbamoyl-AMP (TC-AMP) to the N6 group of A37, together with TsaE and TsaB. TsaD likely plays a direct catalytic role in this reaction. This is tRNA N6-adenosine threonylcarbamoyltransferase from Anaeromyxobacter sp. (strain Fw109-5).